Consider the following 448-residue polypeptide: Portal protein (448 aa).

The disordered stretch occupies residues Met-1–Lys-25.

Belongs to the P23virus portal protein family. In terms of assembly, homododecamer. Interacts with the capsid protein. Interacts with the terminase large subunit; this interaction allows the packaging of viral DNA.

It is found in the virion. Functionally, forms the portal vertex of the capsid. This portal plays critical roles in head assembly, genome packaging, neck/tail attachment, and genome ejection. The portal protein multimerizes as a single ring-shaped homododecamer arranged around a central channel. Forms the portal vertex of the capsid. This portal plays critical roles in head assembly, genome packaging, neck/tail attachment, and genome ejection. The sequence is that of Portal protein from Thermus thermophilus (Thermus thermophilus phage G20c).